The sequence spans 253 residues: MRILLSNDDGIHAPGIQTLAKALREFAEVQVVAPDRNRSGASNSLTLESSLRTFTFENGDIAVQMGTPTDCVYLGVNALMRPRPDIVVSGINAGPNLGDDVIYSGTVAAAMEGRHLGFPALAVSLNGYQHYDTAAAVTCTILRALSREPLRTGRILNINVPDLPLDQIKGIRVTRCGNRHPADQVIPQKDPRGNTLYWIGPPGDKRDAGPGTDFAAVDEGYVSVTPLHVDLTAHQAHEVVSDWLERVGVDGQW.

The a divalent metal cation site is built by Asp-8, Asp-9, Ser-39, and Asn-92.

The protein belongs to the SurE nucleotidase family. A divalent metal cation is required as a cofactor.

The protein localises to the cytoplasm. The enzyme catalyses a ribonucleoside 5'-phosphate + H2O = a ribonucleoside + phosphate. It catalyses the reaction a ribonucleoside 3'-phosphate + H2O = a ribonucleoside + phosphate. The catalysed reaction is [phosphate](n) + H2O = [phosphate](n-1) + phosphate + H(+). Its function is as follows. Nucleotidase with a broad substrate specificity as it can dephosphorylate various ribo- and deoxyribonucleoside 5'-monophosphates and ribonucleoside 3'-monophosphates with highest affinity to 3'-AMP. Also hydrolyzes polyphosphate (exopolyphosphatase activity) with the preference for short-chain-length substrates (P20-25). Might be involved in the regulation of dNTP and NTP pools, and in the turnover of 3'-mononucleotides produced by numerous intracellular RNases (T1, T2, and F) during the degradation of various RNAs. In Klebsiella pneumoniae (strain 342), this protein is 5'/3'-nucleotidase SurE.